Here is a 174-residue protein sequence, read N- to C-terminus: Dual-action ribosomal maturation protein DarP (174 aa).

It belongs to the DarP family.

The protein resides in the cytoplasm. Its function is as follows. Member of a network of 50S ribosomal subunit biogenesis factors which assembles along the 30S-50S interface, preventing incorrect 23S rRNA structures from forming. Promotes peptidyl transferase center (PTC) maturation. This chain is Dual-action ribosomal maturation protein DarP, found in Vibrio campbellii (strain ATCC BAA-1116).